The chain runs to 197 residues: CRISPR system CMR subunit Cmr7 1 (197 aa).

Belongs to the CRISPR system Cmr7 family. In terms of assembly, possible homodimer. Part of the CMR ribonucleoprotein complex, consisting of crRNA plus Cmr1/Cmr2/Cmr3/Cmr4/Cmr5/Cmr6 at 1:1 and possibly 3 Cmr7 dimers. A Cmr2/Cmr3/Cmr7 subcomplex without crRNA can also be isolated. It does not cleave target RNA.

Its subcellular location is the cytoplasm. Its function is as follows. CRISPR (clustered regularly interspaced short palindromic repeat) is an adaptive immune system that provides protection against mobile genetic elements (viruses, transposable elements and conjugative plasmids). CRISPR clusters contain spacers, sequences complementary to antecedent mobile elements, and target invading nucleic acids. CRISPR clusters are transcribed and processed into CRISPR RNA (crRNA). The CMR complex degrades RNA complementary to the crRNA (target RNA) within UA dinucleotides, generating 3'-OH and 5'-phosphate ends. Activity is dependent on the 8 nt long 5' tag in the crRNA, an unpaired 3' flag on the target RNA, and is stimulated by ATP. Some cleavage of the guide crRNA can also be observed. This Saccharolobus solfataricus (strain ATCC 35092 / DSM 1617 / JCM 11322 / P2) (Sulfolobus solfataricus) protein is CRISPR system CMR subunit Cmr7 1 (cmr7A).